The following is a 222-amino-acid chain: Peptide methionine sulfoxide reductase MsrA 1 (222 aa).

Cys-57 is a catalytic residue.

Belongs to the MsrA Met sulfoxide reductase family.

The enzyme catalyses L-methionyl-[protein] + [thioredoxin]-disulfide + H2O = L-methionyl-(S)-S-oxide-[protein] + [thioredoxin]-dithiol. It carries out the reaction [thioredoxin]-disulfide + L-methionine + H2O = L-methionine (S)-S-oxide + [thioredoxin]-dithiol. Has an important function as a repair enzyme for proteins that have been inactivated by oxidation. Catalyzes the reversible oxidation-reduction of methionine sulfoxide in proteins to methionine. In Synechocystis sp. (strain ATCC 27184 / PCC 6803 / Kazusa), this protein is Peptide methionine sulfoxide reductase MsrA 1 (msrA1).